The primary structure comprises 96 residues: uncharacterized protein (96 aa).

An N-terminal signal peptide occupies residues 1-28 (MNKKAIVGIFMSILMAGLVGCAGSSDAQ).

This is an uncharacterized protein from Butyrivibrio fibrisolvens.